The following is a 146-amino-acid chain: Ribonuclease H (146 aa).

The 143-residue stretch at 1–143 (MQKKITIYTD…CDELARQAIQ (143 aa)) folds into the RNase H type-1 domain. Positions 10, 48, 70, and 135 each coordinate Mg(2+).

Belongs to the RNase H family. As to quaternary structure, monomer. It depends on Mg(2+) as a cofactor.

Its subcellular location is the cytoplasm. It catalyses the reaction Endonucleolytic cleavage to 5'-phosphomonoester.. In terms of biological role, endonuclease that specifically degrades the RNA of RNA-DNA hybrids. The chain is Ribonuclease H from Chlorobium luteolum (strain DSM 273 / BCRC 81028 / 2530) (Pelodictyon luteolum).